The primary structure comprises 394 residues: Putative 8-amino-7-oxononanoate synthase (394 aa).

Arg23 contributes to the substrate binding site. 110–111 (GY) contacts pyridoxal 5'-phosphate. His135 serves as a coordination point for substrate. Pyridoxal 5'-phosphate contacts are provided by residues Ser182, 207–210 (DEAH), and 238–241 (TFSK). N6-(pyridoxal phosphate)lysine is present on Lys241. Residue Thr355 participates in substrate binding.

This sequence belongs to the class-II pyridoxal-phosphate-dependent aminotransferase family. BioF subfamily. Homodimer. Pyridoxal 5'-phosphate is required as a cofactor.

The enzyme catalyses 6-carboxyhexanoyl-[ACP] + L-alanine + H(+) = (8S)-8-amino-7-oxononanoate + holo-[ACP] + CO2. Its pathway is cofactor biosynthesis; biotin biosynthesis. In terms of biological role, catalyzes the decarboxylative condensation of pimeloyl-[acyl-carrier protein] and L-alanine to produce 8-amino-7-oxononanoate (AON), [acyl-carrier protein], and carbon dioxide. The sequence is that of Putative 8-amino-7-oxononanoate synthase (bioF) from Bacillus cereus (strain Q1).